The primary structure comprises 80 residues: Acyl carrier protein (80 aa).

A Carrier domain is found at 1-79; it reads MTEEEIFNKI…EAVEYIKSHQ (79 aa). At S39 the chain carries O-(pantetheine 4'-phosphoryl)serine.

This sequence belongs to the acyl carrier protein (ACP) family. Post-translationally, 4'-phosphopantetheine is transferred from CoA to a specific serine of apo-ACP by AcpS. This modification is essential for activity because fatty acids are bound in thioester linkage to the sulfhydryl of the prosthetic group.

Its subcellular location is the cytoplasm. The protein operates within lipid metabolism; fatty acid biosynthesis. In terms of biological role, carrier of the growing fatty acid chain in fatty acid biosynthesis. In Lactobacillus johnsonii (strain CNCM I-12250 / La1 / NCC 533), this protein is Acyl carrier protein.